The chain runs to 177 residues: Large ribosomal subunit protein uL6 (177 aa).

This sequence belongs to the universal ribosomal protein uL6 family. As to quaternary structure, part of the 50S ribosomal subunit.

Its function is as follows. This protein binds to the 23S rRNA, and is important in its secondary structure. It is located near the subunit interface in the base of the L7/L12 stalk, and near the tRNA binding site of the peptidyltransferase center. This is Large ribosomal subunit protein uL6 from Haemophilus influenzae (strain 86-028NP).